The following is a 294-amino-acid chain: RAB7A-interacting MON1-CCZ1 complex subunit 1 (294 aa).

Position 2 is an N-acetylalanine (Ala2).

The protein belongs to the RIMOC1 family. In terms of assembly, interacts with the MON1A-CCZ1B complex. Interacts with GDP-bound RAB7A and promotes its interaction with the MON1A-CCZ1B complex.

It localises to the cytoplasm. The protein resides in the cytosol. Its function is as follows. Plays an important role in the removal of damaged mitochondria via mitophagy by controlling the stability and localization of RAB7A. Required for the recruitment of RAB7A and ATG9A vesicles to damaged mitochondria and promotes the stability of RAB7A by inhibiting its proteasomal degradation during mitophagy. This is RAB7A-interacting MON1-CCZ1 complex subunit 1 from Mus musculus (Mouse).